The following is a 485-amino-acid chain: Glutamyl-tRNA(Gln) amidotransferase subunit A (485 aa).

Catalysis depends on charge relay system residues Lys79 and Ser154. Ser178 functions as the Acyl-ester intermediate in the catalytic mechanism.

This sequence belongs to the amidase family. GatA subfamily. As to quaternary structure, heterotrimer of A, B and C subunits.

It catalyses the reaction L-glutamyl-tRNA(Gln) + L-glutamine + ATP + H2O = L-glutaminyl-tRNA(Gln) + L-glutamate + ADP + phosphate + H(+). Its function is as follows. Allows the formation of correctly charged Gln-tRNA(Gln) through the transamidation of misacylated Glu-tRNA(Gln) in organisms which lack glutaminyl-tRNA synthetase. The reaction takes place in the presence of glutamine and ATP through an activated gamma-phospho-Glu-tRNA(Gln). This chain is Glutamyl-tRNA(Gln) amidotransferase subunit A, found in Staphylococcus carnosus (strain TM300).